A 404-amino-acid polypeptide reads, in one-letter code: Caspase b (404 aa).

A propeptide spanning residues 1 to 171 (MEDITQLLSD…DIYTPRSGTQ (171 aa)) is cleaved from the precursor. Positions 8-80 (LSDVLEDLVE…LRKIKQNERA (73 aa)) constitute a Pyrin domain. Residues His249 and Cys296 contribute to the active site. A propeptide spanning residues 301–316 (SSGVLAQDSVFASDSW) is cleaved from the precursor.

The protein belongs to the peptidase C14A family. As to quaternary structure, upon direct LPS-binding, forms large homooligomers, resulting in its activation. These oligomers are often referred to as 'non-canonical inflammasomes'. Heterotetramer that consists of two anti-parallel arranged heterodimers, each one formed by a 20 kDa (p20) and a 10 kDa (p10) subunit. Interacts with caspa. Interacts with pycard; the interaction only occurs in the presence of nlrp1. Component of NLRP1 inflammasomes. Inflammasomes are supramolecular complexes that assemble in the cytosol in response to pathogens and other damage-associated signals and play critical roles in innate immunity and inflammation. The NLRP1 inflammasome is composed of the signal sensor nlrp1, and the adapter pycard (asc), which recruit effector pro-inflammatory caspases caspa and/or caspb. The interaction between nlrp1 and pycard is required for the sequential recruitment of caspa and then caspb. Caspa is preferentially recruited first and this causes the cleavage of pro-il1b into the midformed il1b. This is followed by the recruitment of caspb, which is activated and cleaves the midformed il1b resulting in il1b maturation. Post-translationally, the two subunits are derived from the precursor sequence by an autocatalytic mechanism. In terms of tissue distribution, expressed in the spleen, kidney and liver, and highly expressed in the gills and gut.

Its subcellular location is the inflammasome. The protein resides in the cytoplasm. It catalyses the reaction Strict requirement for Asp at the P1 position. It has a preferred cleavage sequence of Tyr-Val-Ala-Asp-|- but also cleaves at Asp-Glu-Val-Asp-|-.. Its activity is regulated as follows. Activated by homooligomerization induced by direct binding to cytosolic LPS. Functionally, thiol protease which cleaves IL-1 beta (il1b), releasing the mature cytokine which is involved in a variety of inflammatory processes, and mediates apoptosis. Component of the NLRP1 inflammasome, which plays a crucial role in innate immunity and inflammation. In response to pathogens and other damage-associated signals, recruited to the NLRP1 inflammasome in its precursor form following the recruitment of caspase caspa. Its subsequent activation causes the cleavage of the midformed pro-il1b and results in il1b maturation and secretion in the extracellular milieu. Activated by direct binding to bacterial lipopolysaccharides (LPS), which causes non-canonical inflammasome activation and results in the pyroptosis of infected cells and their extrusion into the gut lumen, as well as in cytokine secretion. Plays a crucial role in the restriction of bacterial infection to intestinal sites. Pyroptosis limits bacterial replication, while cytokine secretion promotes the recruitment and activation of immune cells and triggers mucosal inflammation. Promotes pyroptosis by bacterial infection by E.piscicida. The sequence is that of Caspase b from Danio rerio (Zebrafish).